Reading from the N-terminus, the 277-residue chain is F420-dependent methylenetetrahydromethanopterin dehydrogenase (277 aa).

It belongs to the MTD family.

It catalyses the reaction 5,10-methylenetetrahydromethanopterin + oxidized coenzyme F420-(gamma-L-Glu)(n) + 2 H(+) = 5,10-methenyl-5,6,7,8-tetrahydromethanopterin + reduced coenzyme F420-(gamma-L-Glu)(n). The protein operates within one-carbon metabolism; methanogenesis from CO(2); 5,10-methylene-5,6,7,8-tetrahydromethanopterin from 5,10-methenyl-5,6,7,8-tetrahydromethanopterin (coenzyme F420 route): step 1/1. Catalyzes the reversible reduction of methenyl-H(4)MPT(+) to methylene-H(4)MPT. This chain is F420-dependent methylenetetrahydromethanopterin dehydrogenase, found in Methanococcus maripaludis (strain DSM 14266 / JCM 13030 / NBRC 101832 / S2 / LL).